The following is a 334-amino-acid chain: GTP 3',8-cyclase (334 aa).

Positions 8-244 (RYGRPLRDLR…GEVAQRHAFA (237 aa)) constitute a Radical SAM core domain. Residue R17 participates in GTP binding. The [4Fe-4S] cluster site is built by C24 and C28. Y30 provides a ligand contact to S-adenosyl-L-methionine. C31 serves as a coordination point for [4Fe-4S] cluster. Residue R70 participates in GTP binding. Position 74 (G74) interacts with S-adenosyl-L-methionine. T101 serves as a coordination point for GTP. S125 contacts S-adenosyl-L-methionine. Residue K163 coordinates GTP. M197 lines the S-adenosyl-L-methionine pocket. [4Fe-4S] cluster-binding residues include C261 and C264. 266–268 (RAR) is a binding site for GTP. C278 is a binding site for [4Fe-4S] cluster.

Belongs to the radical SAM superfamily. MoaA family. In terms of assembly, monomer and homodimer. Requires [4Fe-4S] cluster as cofactor.

The enzyme catalyses GTP + AH2 + S-adenosyl-L-methionine = (8S)-3',8-cyclo-7,8-dihydroguanosine 5'-triphosphate + 5'-deoxyadenosine + L-methionine + A + H(+). The protein operates within cofactor biosynthesis; molybdopterin biosynthesis. In terms of biological role, catalyzes the cyclization of GTP to (8S)-3',8-cyclo-7,8-dihydroguanosine 5'-triphosphate. The sequence is that of GTP 3',8-cyclase from Xanthomonas axonopodis pv. citri (strain 306).